Reading from the N-terminus, the 312-residue chain is Regulation of nuclear pre-mRNA domain-containing protein 1A (312 aa).

Residue Ser2 is modified to N-acetylserine. The CID domain occupies 2-133 (SAFSEAALEK…QLKQALYGDK (132 aa)). Phosphoserine is present on residues Ser153, Ser156, and Ser285. Positions 244 to 286 (LADFLRCQKEALAEKEHKLEEYKRKLARVSLVRKELRSRIQSL) form a coiled coil.

Belongs to the UPF0400 (RTT103) family. May form a heterodimer with RPRD1B. Associates with the RNA polymerase II subunit POLR2A (via CTD phosphorylated at 'Ser-2' and 'Ser-7' of the heptad repeats).

Its subcellular location is the nucleus. Functionally, interacts with phosphorylated C-terminal heptapeptide repeat domain (CTD) of the largest RNA polymerase II subunit POLR2A, and participates in dephosphorylation of the CTD by RPAP2. May act as a negative regulator of cyclin-D1 (CCND1) and cyclin-E (CCNE1) in the cell cycle. In Pongo abelii (Sumatran orangutan), this protein is Regulation of nuclear pre-mRNA domain-containing protein 1A (RPRD1A).